The primary structure comprises 423 residues: Serine--tRNA ligase (423 aa).

229–231 (TAE) serves as a coordination point for L-serine. ATP is bound at residue 260–262 (RKE). L-serine is bound at residue E283. 347 to 350 (EVSS) lines the ATP pocket. Residue S383 coordinates L-serine.

It belongs to the class-II aminoacyl-tRNA synthetase family. Type-1 seryl-tRNA synthetase subfamily. As to quaternary structure, homodimer. The tRNA molecule binds across the dimer.

The protein resides in the cytoplasm. The enzyme catalyses tRNA(Ser) + L-serine + ATP = L-seryl-tRNA(Ser) + AMP + diphosphate + H(+). It catalyses the reaction tRNA(Sec) + L-serine + ATP = L-seryl-tRNA(Sec) + AMP + diphosphate + H(+). It functions in the pathway aminoacyl-tRNA biosynthesis; selenocysteinyl-tRNA(Sec) biosynthesis; L-seryl-tRNA(Sec) from L-serine and tRNA(Sec): step 1/1. Catalyzes the attachment of serine to tRNA(Ser). Is also able to aminoacylate tRNA(Sec) with serine, to form the misacylated tRNA L-seryl-tRNA(Sec), which will be further converted into selenocysteinyl-tRNA(Sec). In Chloroflexus aurantiacus (strain ATCC 29366 / DSM 635 / J-10-fl), this protein is Serine--tRNA ligase.